The following is a 149-amino-acid chain: Transcriptional repressor NrdR (149 aa).

Residues 3–34 fold into a zinc finger; sequence CPFCATDDTKVVDSRLTADGYQIRRRRECPVC. One can recognise an ATP-cone domain in the interval 49–139; that stretch reads PHIVKNNGSR…VYLSFDDVEE (91 aa).

The protein belongs to the NrdR family. Zn(2+) serves as cofactor.

Negatively regulates transcription of bacterial ribonucleotide reductase nrd genes and operons by binding to NrdR-boxes. This is Transcriptional repressor NrdR from Glaesserella parasuis serovar 5 (strain SH0165) (Haemophilus parasuis).